A 174-amino-acid chain; its full sequence is Glutamyl-tRNA(Gln) amidotransferase subunit F, mitochondrial (174 aa).

This sequence belongs to the GatF family. Subunit of the heterotrimeric GatFAB amidotransferase (AdT) complex, composed of A, B and F subunits.

Its subcellular location is the mitochondrion inner membrane. The catalysed reaction is L-glutamyl-tRNA(Gln) + L-glutamine + ATP + H2O = L-glutaminyl-tRNA(Gln) + L-glutamate + ADP + phosphate + H(+). In terms of biological role, allows the formation of correctly charged Gln-tRNA(Gln) through the transamidation of misacylated Glu-tRNA(Gln) in the mitochondria. The reaction takes place in the presence of glutamine and ATP through an activated gamma-phospho-Glu-tRNA(Gln). Required for proper protein synthesis within the mitochondrion. The chain is Glutamyl-tRNA(Gln) amidotransferase subunit F, mitochondrial from Kluyveromyces lactis (strain ATCC 8585 / CBS 2359 / DSM 70799 / NBRC 1267 / NRRL Y-1140 / WM37) (Yeast).